Reading from the N-terminus, the 1041-residue chain is Leucine-rich repeat receptor-like protein kinase TDR (1041 aa).

The signal sequence occupies residues 1-29; it reads MKKKNISPSLVLHPLLLLLLPFFAFNSLA. Residues 30-652 are Extracellular-facing; it reads LKFSPQLLSL…HHKEERPKKT (623 aa). Residues C69 and C76 are joined by a disulfide bond. N-linked (GlcNAc...) asparagine glycans are attached at residues N78, N92, and N111. LRR repeat units follow at residues 80-104, 105-128, 130-152, 154-176, 177-199, 200-224, 225-248, 250-272, 273-296, 297-319, 321-344, 345-368, 369-392, 394-416, 418-439, 440-464, 466-488, 511-535, 536-558, 559-583, and 585-607; these read TAQV…IRYL, SSLL…IFDL, KLTT…ISKL, FLKV…VSRL, RFLE…AYGG, LQRL…LGLL, TELQ…FALL, NLKY…LGNL, SNLE…YSNL, KSLK…GFST, KNLT…IGEL, PELT…LGSN, GKLE…LCHG, KLYK…LTRC, SLWR…GFGS, LRNL…FATA, VLQY…IWKA, CKSF…IGHC, EKLL…EIST, LPSI…FGSS, and TITT…SFAH. The segment at 186 to 188 is CLE peptide binding; sequence GSY. The interval 233 to 235 is CLE peptide binding; it reads GYN. N-linked (GlcNAc...) asparagine glycans are attached at residues N258 and N271. The segment at 303-307 is CLE peptide binding; it reads DFSSN. N322, N332, and N356 each carry an N-linked (GlcNAc...) asparagine glycan. Positions 375–377 are CLE peptide binding; it reads DVS. N378 is a glycosylation site (N-linked (GlcNAc...) asparagine). C390 and C416 form a disulfide bridge. Positions 421–423 are CLE peptide binding; it reads RFR. 5 N-linked (GlcNAc...) asparagine glycosylation sites follow: N430, N442, N471, N525, and N542. C511 and C535 are joined by a disulfide. N590 carries an N-linked (GlcNAc...) asparagine glycan. An intrachain disulfide couples C620 to C628. The helical transmembrane segment at 653–673 threads the bilayer; it reads AGAIVWILAAAIGVGFFVLVA. At 674–1041 the chain is on the cytoplasmic side; that stretch reads ATRCFQKSYG…HDVKCQRIGV (368 aa). T710 carries the phosphothreonine modification. The Protein kinase domain maps to 719-1001; the sequence is SKTDNILGMG…DVLLILQEAK (283 aa). Residues 725-733 and K747 contribute to the ATP site; that span reads LGMGSTGTV. 2 positions are modified to phosphotyrosine: Y798 and Y839. Catalysis depends on D852, which acts as the Proton acceptor. Position 884 is a phosphoserine (S884). Phosphotyrosine occurs at positions 892 and 899. Phosphothreonine is present on T900.

The protein belongs to the protein kinase superfamily. Ser/Thr protein kinase family. In terms of assembly, interacts specifically with the mature peptides CLE41p and CLE44p, especially in the presence of SERK2. Interacts with LURE1.2. In terms of tissue distribution, widely expressed along the vascular strands. In roots and hypocotyls, confined to procambial cells.

The protein resides in the cell membrane. The catalysed reaction is L-seryl-[protein] + ATP = O-phospho-L-seryl-[protein] + ADP + H(+). It catalyses the reaction L-threonyl-[protein] + ATP = O-phospho-L-threonyl-[protein] + ADP + H(+). Its function is as follows. Acts with CLE41p and CLE44p peptides as a ligand-receptor pair in a signal transduction pathway involved in the regulation of procambium maintenance and polarity during vascular-tissue development. Mediates repression of tracheary element differentiation and the promotion of procambial cells formation and polar division adjacent to phloem cells in the veins. The sequence is that of Leucine-rich repeat receptor-like protein kinase TDR from Arabidopsis thaliana (Mouse-ear cress).